The sequence spans 313 residues: Biotin synthase (313 aa).

The region spanning asparagine 28–serine 258 is the Radical SAM core domain. Residues cysteine 46, cysteine 50, and cysteine 53 each coordinate [4Fe-4S] cluster. Residues cysteine 90, cysteine 121, cysteine 181, and arginine 256 each contribute to the [2Fe-2S] cluster site.

Belongs to the radical SAM superfamily. Biotin synthase family. In terms of assembly, homodimer. It depends on [4Fe-4S] cluster as a cofactor. Requires [2Fe-2S] cluster as cofactor.

The enzyme catalyses (4R,5S)-dethiobiotin + (sulfur carrier)-SH + 2 reduced [2Fe-2S]-[ferredoxin] + 2 S-adenosyl-L-methionine = (sulfur carrier)-H + biotin + 2 5'-deoxyadenosine + 2 L-methionine + 2 oxidized [2Fe-2S]-[ferredoxin]. It functions in the pathway cofactor biosynthesis; biotin biosynthesis; biotin from 7,8-diaminononanoate: step 2/2. Its function is as follows. Catalyzes the conversion of dethiobiotin (DTB) to biotin by the insertion of a sulfur atom into dethiobiotin via a radical-based mechanism. The sequence is that of Biotin synthase from Francisella tularensis subsp. holarctica (strain FTNF002-00 / FTA).